Consider the following 58-residue polypeptide: Large ribosomal subunit protein bL32 (58 aa).

A compositionally biased stretch (basic residues) spans 1 to 19; that stretch reads MAVPKKRTSKSKKNMRKAN. Residues 1-58 are disordered; sequence MAVPKKRTSKSKKNMRKANWKNQAKLAAKKALSLGKSVETQRSHSFVHPRYEEEEEED. Positions 20-32 are enriched in low complexity; that stretch reads WKNQAKLAAKKAL.

It belongs to the bacterial ribosomal protein bL32 family.

This chain is Large ribosomal subunit protein bL32, found in Trichodesmium erythraeum (strain IMS101).